We begin with the raw amino-acid sequence, 84 residues long: Small ribosomal subunit protein uS17 (84 aa).

Belongs to the universal ribosomal protein uS17 family. In terms of assembly, part of the 30S ribosomal subunit.

Functionally, one of the primary rRNA binding proteins, it binds specifically to the 5'-end of 16S ribosomal RNA. The chain is Small ribosomal subunit protein uS17 from Nitrosomonas europaea (strain ATCC 19718 / CIP 103999 / KCTC 2705 / NBRC 14298).